The following is a 181-amino-acid chain: Small ribosomal subunit protein cS23 (181 aa).

The disordered stretch occupies residues 1-40 (MLPMSVHPATTPALASRPRVSLPRPSTPSSSSSLVHLKSR). Residues 14 to 36 (LASRPRVSLPRPSTPSSSSSLVH) are compositionally biased toward low complexity.

It belongs to the chloroplast-specific ribosomal protein cS23 family. In terms of assembly, part of the 30S ribosomal subunit.

It localises to the plastid. It is found in the chloroplast. Functionally, component of the chloroplast ribosome (chloro-ribosome), a dedicated translation machinery responsible for the synthesis of chloroplast genome-encoded proteins, including proteins of the transcription and translation machinery and components of the photosynthetic apparatus. In Hordeum vulgare (Barley), this protein is Small ribosomal subunit protein cS23 (PSRP3).